The sequence spans 181 residues: Large ribosomal subunit protein bL17 (181 aa).

A disordered region spans residues 129-181; sequence AEKSEKSAKTAKAAKAPAKKATAKKASTKAVAAKKKAVKKAQKKDRAASAARA. Basic residues predominate over residues 145-171; sequence PAKKATAKKASTKAVAAKKKAVKKAQK.

It belongs to the bacterial ribosomal protein bL17 family. Part of the 50S ribosomal subunit. Contacts protein L32.

This chain is Large ribosomal subunit protein bL17, found in Bdellovibrio bacteriovorus (strain ATCC 15356 / DSM 50701 / NCIMB 9529 / HD100).